The chain runs to 1011 residues: Multiple C2 domain and transmembrane region protein 7 (1011 aa).

The region spanning 1-110 (MMMSNLKLGV…PHSDAVVLHF (110 aa)) is the C2 1 domain. Residues 178–195 (QEHQHQHPQGPNQSSSLA) are compositionally biased toward polar residues. The disordered stretch occupies residues 178–201 (QEHQHQHPQGPNQSSSLAAEQDNH). C2 domains follow at residues 261 to 381 (IHKD…PQWY), 421 to 546 (VDCS…ARWY), and 587 to 709 (YSSD…THSY). Ca(2+) contacts are provided by aspartate 294, aspartate 300, aspartate 347, aspartate 349, and aspartate 354. Transmembrane regions (helical) follow at residues 812 to 832 (MMTV…ICSW), 846 to 866 (LMLV…MFLI), and 954 to 974 (IFVI…IQIV).

It belongs to the MCTP family. It depends on Ca(2+) as a cofactor. Accumulates specifically in hydathodes. Restricted the basal meristem of roots. Observed in flowers.

Its subcellular location is the membrane. The protein resides in the vesicle. The protein localises to the endosome membrane. Its function is as follows. May function as a signaling molecule by regulating the trafficking of other regulators. This Arabidopsis thaliana (Mouse-ear cress) protein is Multiple C2 domain and transmembrane region protein 7.